A 155-amino-acid polypeptide reads, in one-letter code: Endoribonuclease YbeY (155 aa).

Residues His120, His124, and His130 each coordinate Zn(2+).

The protein belongs to the endoribonuclease YbeY family. Requires Zn(2+) as cofactor.

Its subcellular location is the cytoplasm. In terms of biological role, single strand-specific metallo-endoribonuclease involved in late-stage 70S ribosome quality control and in maturation of the 3' terminus of the 16S rRNA. The sequence is that of Endoribonuclease YbeY from Borreliella burgdorferi (strain ATCC 35210 / DSM 4680 / CIP 102532 / B31) (Borrelia burgdorferi).